The chain runs to 76 residues: Small ribosomal subunit protein bS18 (76 aa).

This sequence belongs to the bacterial ribosomal protein bS18 family. Part of the 30S ribosomal subunit. Forms a tight heterodimer with protein bS6.

In terms of biological role, binds as a heterodimer with protein bS6 to the central domain of the 16S rRNA, where it helps stabilize the platform of the 30S subunit. The polypeptide is Small ribosomal subunit protein bS18 (Brevibacillus brevis (strain 47 / JCM 6285 / NBRC 100599)).